The sequence spans 277 residues: Thiazole synthase (277 aa).

The active-site Schiff-base intermediate with DXP is lysine 118. Residues glycine 179, 205–206 (AG), and 227–228 (NT) contribute to the 1-deoxy-D-xylulose 5-phosphate site.

This sequence belongs to the ThiG family. In terms of assembly, homotetramer. Forms heterodimers with either ThiH or ThiS.

It is found in the plastid. The protein localises to the chloroplast. It carries out the reaction [ThiS sulfur-carrier protein]-C-terminal-Gly-aminoethanethioate + 2-iminoacetate + 1-deoxy-D-xylulose 5-phosphate = [ThiS sulfur-carrier protein]-C-terminal Gly-Gly + 2-[(2R,5Z)-2-carboxy-4-methylthiazol-5(2H)-ylidene]ethyl phosphate + 2 H2O + H(+). The protein operates within cofactor biosynthesis; thiamine diphosphate biosynthesis. Its function is as follows. Catalyzes the rearrangement of 1-deoxy-D-xylulose 5-phosphate (DXP) to produce the thiazole phosphate moiety of thiamine. Sulfur is provided by the thiocarboxylate moiety of the carrier protein ThiS. In vitro, sulfur can be provided by H(2)S. The protein is Thiazole synthase of Emiliania huxleyi (Coccolithophore).